Consider the following 448-residue polypeptide: Damage-control phosphatase ARMT1 (448 aa).

Mn(2+) is bound by residues Asp257 and Asn258. 257-258 (DN) is a binding site for substrate. 2 residues coordinate S-adenosyl-L-methionine: Glu262 and Asp295. A Mn(2+)-binding site is contributed by Asp295. Residues 371 to 375 (DLNYR) and Lys408 contribute to the substrate site. Residues 405-408 (RTLK) carry the Subfamily III RTxK motif motif.

It belongs to the damage-control phosphatase family. Sugar phosphate phosphatase III subfamily. Mn(2+) serves as cofactor. Requires Ni(2+) as cofactor. Automethylated.

It carries out the reaction beta-D-fructose 1-phosphate + H2O = D-fructose + phosphate. The catalysed reaction is beta-D-fructose 6-phosphate = dihydroxyacetone + D-glyceraldehyde 3-phosphate. The enzyme catalyses L-glutamyl-[protein] + S-adenosyl-L-methionine = [protein]-L-glutamate 5-O-methyl ester + S-adenosyl-L-homocysteine. In terms of biological role, metal-dependent phosphatase that shows phosphatase activity against several substrates, including fructose-1-phosphate and fructose-6-phosphate. Its preference for fructose-1-phosphate, a strong glycating agent that causes DNA damage rather than a canonical yeast metabolite, suggests a damage-control function in hexose phosphate metabolism. Has also been shown to have O-methyltransferase activity that methylates glutamate residues of target proteins to form gamma-glutamyl methyl ester residues. Possibly methylates PCNA, suggesting it is involved in the DNA damage response. The polypeptide is Damage-control phosphatase ARMT1 (Danio rerio (Zebrafish)).